The following is a 67-amino-acid chain: uncharacterized protein (67 aa).

This is an uncharacterized protein from Escherichia coli (strain K12).